Reading from the N-terminus, the 722-residue chain is MAEAPGAALSRAGWYLSDEGIEACTSSPDKVNVNDIILIALNLEGPCVLQIQKIRNVAAPKDNEESQAAPRMLRLQMTDGHISCTAVEFSYLSKISLNTPPGTKVKLSGAVDIKNGFLLLNDSNTTVLGGEVEHLIEKWELQRSLSKHNRSNIGTEGGPPPFVPFGQKCVSHIQVDSRELDRRKTLQVTMPVKPPNDNDEFEKQRTAAIAEVAKSKETKTFGGGGGGARSNLNMHAAGNRNREILQKEKANKSEGKHEGVYRELVDEKALRHITEMGFSKEASRQALMDNGNNLEAALNVLLNSNKQKPVTGPPLRGKGKGRGRIRSEDEEELGNARPSAPSTLFDFLESKMGTLSVEEPKSQPQQLHQGQNRVSNTEQNGVKDNNQPRYLPRNDTRQPRNEKPPRFQRDTQNSKAVLEGSGLPRNRGSERPSTSSGSEGWAEERTKCDRSYSRYDRTKDTSYLLSSQHSDTVFKKRDNSMQSRSGKGPSYTEAKENPFPQESVDYNNHKRGKRENQTANSDHFYDRKPRTINNEAFSGVKIEKHFNVNTDYQHPVRMNSFIGVPNGETEMPLKGRRVGPIKPAGPIMASSCDDKIFYSSGPKRRSGPIKPEKVLESSIPMEYAKLWKSGDECLALYWEDNKFYRAEVEALHSSGMTAVVKFIDYGNYEEVLLSNIRPIQSEAWEEEGTYDQTLEFRRGGDGQPRRSTRPTQQFYQPPRARN.

In terms of domain architecture, UBA spans 264–304 (LVDEKALRHITEMGFSKEASRQALMDNGNNLEAALNVLLNS). Disordered regions lie at residues 305–342 (NKQK…SAPS), 355–453 (LSVE…RSYS), and 470–526 (SDTV…HFYD). The residue at position 327 (serine 327) is a Phosphoserine. The segment covering 362–388 (SQPQQLHQGQNRVSNTEQNGVKDNNQP) has biased composition (polar residues). Composition is skewed to basic and acidic residues over residues 392-409 (PRND…RFQR) and 442-453 (AEERTKCDRSYS). Lysine 541 participates in a covalent cross-link: Glycyl lysine isopeptide (Lys-Gly) (interchain with G-Cter in SUMO2). The 61-residue stretch at 626 to 686 (LWKSGDECLA…RPIQSEAWEE (61 aa)) folds into the Tudor domain. Positions 695-704 (EFRRGGDGQP) are enriched in basic and acidic residues. Residues 695–722 (EFRRGGDGQPRRSTRPTQQFYQPPRARN) form a disordered region. An EBM motif; may mediate interaction with the EJC region spans residues 702 to 722 (GQPRRSTRPTQQFYQPPRARN).

In terms of assembly, component of mRNA stress granules. Interacts with FMR1, FXR1, FXR2, EWSR1, FUS, SERBP1, EEF1A1 and DDX3X or DDX3Y, and with the small nuclear ribonucleoprotein-associated proteins SNRPB and SNRPN. Interacts with 'Lys-48'-linked tetra-ubiquitin, but not with monoubiquitin or 'Lys-63'-linked ubiquitin chains. May interact with the exon junction complex (EJC) composed at least of CASC3, EIF4A3, MAGOH and RBM8A. Interacts with POLR2A (via the C-terminal domain (CTD)).

Its subcellular location is the cytoplasm. It localises to the nucleus. Functionally, scaffolding protein that specifically recognizes and binds dimethylarginine-containing proteins. Plays a role in the regulation of translation of target mRNAs by binding Arg/Gly-rich motifs (GAR) in dimethylarginine-containing proteins. In nucleus, acts as a coactivator: recognizes and binds asymmetric dimethylation on the core histone tails associated with transcriptional activation (H3R17me2a and H4R3me2a) and recruits proteins at these arginine-methylated loci. In cytoplasm, acts as an antiviral factor that participates in the assembly of stress granules together with G3BP1. The polypeptide is Tudor domain-containing protein 3 (TDRD3) (Bos taurus (Bovine)).